A 198-amino-acid chain; its full sequence is MVEKHLLEFLEKLQFLISKNVKISHYGIENVKKICGVDIAYKGNLGFSVGVSMDINSGDYNYKSYVGEVNFPYIPGFLFMREAPLMIKAIEGLDCHLLLVDGHGIAHPRKSGIAAVIGVLLDFPTIGVAKSRLTGDLVNESEITYVYLNGEKVGVKFGRYFYSPGNKVDLQDCIELGKRGYPKVLKIADMLTKKIKKE.

Mg(2+) contacts are provided by Asp-38 and Asp-101.

Belongs to the endonuclease V family. Mg(2+) serves as cofactor.

It is found in the cytoplasm. It catalyses the reaction Endonucleolytic cleavage at apurinic or apyrimidinic sites to products with a 5'-phosphate.. Functionally, DNA repair enzyme involved in the repair of deaminated bases. Selectively cleaves double-stranded DNA at the second phosphodiester bond 3' to a deoxyinosine leaving behind the intact lesion on the nicked DNA. This chain is Endonuclease V, found in Saccharolobus islandicus (strain M.16.4 / Kamchatka #3) (Sulfolobus islandicus).